A 110-amino-acid chain; its full sequence is Ribonuclease P protein component 1 (110 aa).

The protein belongs to the eukaryotic/archaeal RNase P protein component 1 family. As to quaternary structure, consists of a catalytic RNA component and at least 4-5 protein subunits.

Its subcellular location is the cytoplasm. The enzyme catalyses Endonucleolytic cleavage of RNA, removing 5'-extranucleotides from tRNA precursor.. Functionally, part of ribonuclease P, a protein complex that generates mature tRNA molecules by cleaving their 5'-ends. This chain is Ribonuclease P protein component 1, found in Methanosarcina barkeri (strain Fusaro / DSM 804).